Here is a 318-residue protein sequence, read N- to C-terminus: Olfactory receptor 2T34 (318 aa).

Residues 1–30 (MCSGNQTSQNQTASTDFTLTGLFAESKHAA) are Extracellular-facing. 2 N-linked (GlcNAc...) asparagine glycosylation sites follow: Asn5 and Asn10. Residues 31-54 (LLYTVTFLLFLMALTGNALLILLI) traverse the membrane as a helical segment. The Cytoplasmic portion of the chain corresponds to 55-62 (HSEPRLHT). A helical membrane pass occupies residues 63-84 (PMYFFISQLALMDLMYLCVTVP). Residues 85-105 (KMLVGQVTGDDTISPSGCGIQ) are Extracellular-facing. Cys102 and Cys194 are oxidised to a cystine. The helical transmembrane segment at 106 to 125 (MFFHLTLAGAEVFLLAAMAY) threads the bilayer. Residues 126–144 (DRYAAVCRPLHYPLLMNQR) are Cytoplasmic-facing. Residues 145–163 (VCQLLVSACWVLGMVDGLL) traverse the membrane as a helical segment. The Extracellular portion of the chain corresponds to 164–200 (LTPITMSFPFCQSRKILSFFCETPALLKLSCSDVSLY). The chain crosses the membrane as a helical span at residues 201-224 (KMLTYLCCILMLLTPIMVISSSYT). Residues 225-241 (LILHLIHRMNSAAGRRK) are Cytoplasmic-facing. A helical transmembrane segment spans residues 242–264 (ALATCSSHMIIVLLLFGASFYTY). At 265–277 (MLRSSYHTAEQDM) the chain is on the extracellular side. Residues 278–297 (MVSAFYTIFTPVLNPLIYSL) form a helical membrane-spanning segment. The Cytoplasmic segment spans residues 298–318 (RNKDVTRALRSMMQSRMNQEK).

The protein belongs to the G-protein coupled receptor 1 family.

The protein resides in the cell membrane. In terms of biological role, odorant receptor. The sequence is that of Olfactory receptor 2T34 (OR2T34) from Homo sapiens (Human).